Here is a 227-residue protein sequence, read N- to C-terminus: Cytochrome c oxidase subunit 2 (227 aa).

Residues 1 to 14 are Mitochondrial intermembrane-facing; that stretch reads MAYPFQLGLXDATS. A helical transmembrane segment spans residues 15–45; that stretch reads PIMEELLHFHDHTLMIVFLISSLVLYIITLM. At 46–59 the chain is on the mitochondrial matrix side; it reads LTTKLTHTSTMDAQ. A helical membrane pass occupies residues 60–87; that stretch reads EVETVWTILPAIILILIALPSLRILYMM. The Mitochondrial intermembrane segment spans residues 88–227; that stretch reads DEINNPSLTV…YFETWSAVMV (140 aa). Positions 161, 196, 198, 200, 204, and 207 each coordinate Cu cation. A Mg(2+)-binding site is contributed by Glu-198.

The protein belongs to the cytochrome c oxidase subunit 2 family. In terms of assembly, component of the cytochrome c oxidase (complex IV, CIV), a multisubunit enzyme composed of 14 subunits. The complex is composed of a catalytic core of 3 subunits MT-CO1, MT-CO2 and MT-CO3, encoded in the mitochondrial DNA, and 11 supernumerary subunits COX4I, COX5A, COX5B, COX6A, COX6B, COX6C, COX7A, COX7B, COX7C, COX8 and NDUFA4, which are encoded in the nuclear genome. The complex exists as a monomer or a dimer and forms supercomplexes (SCs) in the inner mitochondrial membrane with NADH-ubiquinone oxidoreductase (complex I, CI) and ubiquinol-cytochrome c oxidoreductase (cytochrome b-c1 complex, complex III, CIII), resulting in different assemblies (supercomplex SCI(1)III(2)IV(1) and megacomplex MCI(2)III(2)IV(2)). Found in a complex with TMEM177, COA6, COX18, COX20, SCO1 and SCO2. Interacts with TMEM177 in a COX20-dependent manner. Interacts with COX20. Interacts with COX16. Cu cation serves as cofactor.

Its subcellular location is the mitochondrion inner membrane. The catalysed reaction is 4 Fe(II)-[cytochrome c] + O2 + 8 H(+)(in) = 4 Fe(III)-[cytochrome c] + 2 H2O + 4 H(+)(out). Its function is as follows. Component of the cytochrome c oxidase, the last enzyme in the mitochondrial electron transport chain which drives oxidative phosphorylation. The respiratory chain contains 3 multisubunit complexes succinate dehydrogenase (complex II, CII), ubiquinol-cytochrome c oxidoreductase (cytochrome b-c1 complex, complex III, CIII) and cytochrome c oxidase (complex IV, CIV), that cooperate to transfer electrons derived from NADH and succinate to molecular oxygen, creating an electrochemical gradient over the inner membrane that drives transmembrane transport and the ATP synthase. Cytochrome c oxidase is the component of the respiratory chain that catalyzes the reduction of oxygen to water. Electrons originating from reduced cytochrome c in the intermembrane space (IMS) are transferred via the dinuclear copper A center (CU(A)) of subunit 2 and heme A of subunit 1 to the active site in subunit 1, a binuclear center (BNC) formed by heme A3 and copper B (CU(B)). The BNC reduces molecular oxygen to 2 water molecules using 4 electrons from cytochrome c in the IMS and 4 protons from the mitochondrial matrix. This chain is Cytochrome c oxidase subunit 2 (MT-CO2), found in Vulpes corsac (Corsac fox).